The following is a 308-amino-acid chain: Secreted frizzled-related protein 1 (308 aa).

Residues methionine 1–alanine 25 form the signal peptide. The region spanning threonine 47–methionine 163 is the FZ domain. Intrachain disulfides connect cysteine 52–cysteine 115, cysteine 62–cysteine 108, cysteine 99–cysteine 134, cysteine 123–cysteine 160, and cysteine 127–cysteine 151. Asparagine 167 carries an N-linked (GlcNAc...) asparagine glycan. 3 disulfide bridges follow: cysteine 180–cysteine 250, cysteine 183–cysteine 252, and cysteine 197–cysteine 300. Positions cysteine 180–cysteine 300 constitute an NTR domain.

It belongs to the secreted frizzled-related protein (sFRP) family. In terms of assembly, interacts with WNT1, WNT2, WNT4, WNT8, MYOC and FRZD6. Highest levels in aortic endothelium, heart, spleen and eye. Lower levels in lung, brain and kidney. Weak expression in liver, skeletal muscle and the medial layer of the aorta. In the cortical brain, localized to neurons and small blood vessels. In the retina, localized to the inner and outer nuclear layers with high expression in the neuronal cell bodies. In the heart, restricted to myocytes. In lung, highest expression found in the epithelium of terminal bronchioles. In kidney, localized to the epithelium of collecting ducts of the medulla and, in spleen, expression restricted to the red pulp in cells associated with the sinuses.

The protein localises to the secreted. Its function is as follows. Soluble frizzled-related proteins (sFRPS) function as modulators of Wnt signaling through direct interaction with Wnts. They have a role in regulating cell growth and differentiation in specific cell types. SFRP1 decreases intracellular beta-catenin levels. Has antiproliferative effects on vascular cells, in vitro and in vivo, and can induce, in vivo, an angiogenic response. In vascular cell cycle, delays the G1 phase and entry into the S phase. In kidney development, inhibits tubule formation and bud growth in metanephroi. Inhibits WNT1/WNT4-mediated TCF-dependent transcription. The polypeptide is Secreted frizzled-related protein 1 (SFRP1) (Bos taurus (Bovine)).